Reading from the N-terminus, the 427-residue chain is Putative dipeptidase MCYG_02918 (427 aa).

The N-terminal stretch at 1–29 (MAPERRSRLSDAGILVSLLALTSLVPVQA) is a signal peptide. Zn(2+)-binding residues include H55, D57, and E167. A disulfide bond links C106 and C196. H194 is a binding site for substrate. Residues H238 and H259 each contribute to the Zn(2+) site. Residues R270 and D330 each coordinate substrate. A glycan (N-linked (GlcNAc...) asparagine) is linked at N402.

It belongs to the metallo-dependent hydrolases superfamily. Peptidase M19 family. Zn(2+) serves as cofactor.

It carries out the reaction an L-aminoacyl-L-amino acid + H2O = 2 an L-alpha-amino acid. Its function is as follows. Hydrolyzes a wide range of dipeptides. This is Putative dipeptidase MCYG_02918 from Arthroderma otae (strain ATCC MYA-4605 / CBS 113480) (Microsporum canis).